We begin with the raw amino-acid sequence, 239 residues long: Uridylate kinase (239 aa).

13-16 (KLSG) contacts ATP. G55 contributes to the UMP binding site. 2 residues coordinate ATP: G56 and R60. Residues D75 and 136–143 (TGNPFFTT) contribute to the UMP site. ATP is bound by residues T163, N164, Y169, and D172.

It belongs to the UMP kinase family. Homohexamer.

It localises to the cytoplasm. The catalysed reaction is UMP + ATP = UDP + ADP. Its pathway is pyrimidine metabolism; CTP biosynthesis via de novo pathway; UDP from UMP (UMPK route): step 1/1. With respect to regulation, inhibited by UTP. Its function is as follows. Catalyzes the reversible phosphorylation of UMP to UDP. This Neisseria meningitidis serogroup A / serotype 4A (strain DSM 15465 / Z2491) protein is Uridylate kinase.